We begin with the raw amino-acid sequence, 302 residues long: ATP synthase gamma chain (302 aa).

This sequence belongs to the ATPase gamma chain family. As to quaternary structure, F-type ATPases have 2 components, CF(1) - the catalytic core - and CF(0) - the membrane proton channel. CF(1) has five subunits: alpha(3), beta(3), gamma(1), delta(1), epsilon(1). CF(0) has three main subunits: a, b and c.

Its subcellular location is the cell membrane. Produces ATP from ADP in the presence of a proton gradient across the membrane. The gamma chain is believed to be important in regulating ATPase activity and the flow of protons through the CF(0) complex. The chain is ATP synthase gamma chain from Kineococcus radiotolerans (strain ATCC BAA-149 / DSM 14245 / SRS30216).